Consider the following 113-residue polypeptide: Large ribosomal subunit protein bL19 (113 aa).

It belongs to the bacterial ribosomal protein bL19 family.

In terms of biological role, this protein is located at the 30S-50S ribosomal subunit interface and may play a role in the structure and function of the aminoacyl-tRNA binding site. The protein is Large ribosomal subunit protein bL19 of Mycolicibacterium smegmatis (strain ATCC 700084 / mc(2)155) (Mycobacterium smegmatis).